An 883-amino-acid polypeptide reads, in one-letter code: Glutamate receptor 2 (883 aa).

Residues 1–21 (MQKIMHISVLLSPVLWGLIFG) form the signal peptide. Residues 22-543 (VSSNSIQIGG…GVFSFLDPLA (522 aa)) are Extracellular-facing. Residues C78 and C330 are joined by a disulfide bond. 4 N-linked (GlcNAc...) asparagine glycosylation sites follow: N256, N370, N406, and N413. L-glutamate-binding residues include P499, T501, and R506. A helical transmembrane segment spans residues 544-564 (YEIWMCIVFAYIGVSVVLFLV). The Cytoplasmic portion of the chain corresponds to 565 to 591 (SRFSPYEWHTEEFEDGRETQSSESTNE). Positions 592-607 (FGIFNSLWFSLGAFMQ) form an intramembrane region, helical; Pore-forming. Residues 608–610 (QGC) lie within the membrane without spanning it. The S-palmitoyl cysteine moiety is linked to residue C610. Residues 611 to 616 (DISPRS) lie on the Cytoplasmic side of the membrane. A helical membrane pass occupies residues 617 to 637 (LSGRIVGGVWWFFTLIIISSY). The Extracellular segment spans residues 638 to 812 (TANLAAFLTV…EKTSALSLSN (175 aa)). Residues S675 and T676 each coordinate L-glutamate. Residue S683 is modified to Phosphoserine; by PKC. The residue at position 717 (S717) is a Phosphoserine; by PKG. Residue E726 coordinates L-glutamate. C739 and C794 are joined by a disulfide. Residues 813-833 (VAGVFYILVGGLGLAMLVALI) form a helical membrane-spanning segment. At 834–883 (EFCYKSRAEAKRMKVAKNPQNINPSSSQNSQNFATYKEGYNVYGIESVKI) the chain is on the cytoplasmic side. C836 is lipidated: S-palmitoyl cysteine. Residues S860 and S863 each carry the phosphoserine modification. The segment at 867-877 (ATYKEGYNVYG) is required for interaction with IQSEC1. Y876 carries the post-translational modification Phosphotyrosine. Phosphoserine is present on S880.

The protein belongs to the glutamate-gated ion channel (TC 1.A.10.1) family. GRIA2 subfamily. As to quaternary structure, homotetramer or heterotetramer of pore-forming glutamate receptor subunits. Tetramers may be formed by the dimerization of dimers. May interact with MPP4. Forms a ternary complex with GRIP1 and CSPG4. Interacts with ATAD1 in an ATP-dependent manner. ATAD1-catalyzed ATP hydrolysis disrupts binding to ATAD1 and to GRIP1 and leads to AMPAR complex disassembly. Interacts with GRIP2. Interacts with GRIP1. Interacts with NSF via its C-terminus. Interacts with CACNG2, PICK1 and GRIP2. Interacts with GRIA1 and SYNDIG1. Part of a complex containing GRIA2, NSF and NAPA and/or NAPB. Interacts with SNX27 (via PDZ domain); the interaction is required for recycling to the plasma membrane when endocytosed and prevent degradation in lysosomes. Interacts with LRFN1. Found in a complex with GRIA1, GRIA3, GRIA4, CNIH2, CNIH3, CACNG2, CACNG3, CACNG4, CACNG5, CACNG7 and CACNG8. Interacts with CACNG5. Interacts with OLFM2. Interacts with AP4B1, AP4E1 and AP4M1; probably indirect it mediates the somatodendritic localization of GRIA2 in neurons. Forms a complex with GRIP1, NSG1 and STX12; controls the intracellular fate of AMPAR and the endosomal sorting of the GRIA2 subunit toward recycling and membrane targeting. Interacts with IQSEC1; the interaction is required for ARF6 activation. Interacts (heterotetramer form) with CNIH2 and CNIH3; this interaction promotes expression at the plasma membrane and extensively modulates their gating properties by slowing deactivation and desensitization kinetics. In terms of processing, palmitoylated. Depalmitoylated upon L-glutamate stimulation. Cys-610 palmitoylation leads to Golgi retention and decreased cell surface expression. In contrast, Cys-836 palmitoylation does not affect cell surface expression but regulates stimulation-dependent endocytosis. Post-translationally, phosphorylation at Tyr-876 is required for interaction with IQSEC1 and ARF6 activation, which in turn triggers AMPAR internalization for persistent synaptic depression. Ubiquitinated by RNF167, leading to its degradation. In terms of processing, N-glycosylated. Detected in forebrain. Detected in dendrites of neuronal cells. Expressed in the pyramidal cell layers of CA1 and CA3 and in the granule cell layer of the dentate gyrus.

The protein resides in the cell membrane. It is found in the postsynaptic cell membrane. Its subcellular location is the postsynaptic density membrane. It catalyses the reaction Ca(2+)(in) = Ca(2+)(out). The catalysed reaction is Na(+)(in) = Na(+)(out). Functionally, ionotropic glutamate receptor that functions as a ligand-gated cation channel, gated by L-glutamate and glutamatergic agonists such as alpha-amino-3-hydroxy-5-methyl-4-isoxazolepropionic acid (AMPA), quisqualic acid, and kainic acid. L-glutamate acts as an excitatory neurotransmitter at many synapses in the central nervous system and plays an important role in fast excitatory synaptic transmission. Binding of the excitatory neurotransmitter L-glutamate induces a conformation change, leading to the opening of the cation channel, and thereby converts the chemical signal to an electrical impulse upon entry of monovalent and divalent cations such as sodium and calcium. The receptor then desensitizes rapidly and enters in a transient inactive state, characterized by the presence of bound agonist. In the presence of CACNG4 or CACNG7 or CACNG8, shows resensitization which is characterized by a delayed accumulation of current flux upon continued application of L-glutamate. Through complex formation with NSG1, GRIP1 and STX12 controls the intracellular fate of AMPAR and the endosomal sorting of the GRIA2 subunit toward recycling and membrane targeting. The protein is Glutamate receptor 2 of Rattus norvegicus (Rat).